We begin with the raw amino-acid sequence, 241 residues long: Proteasome subunit alpha (241 aa).

It belongs to the peptidase T1A family. As to quaternary structure, the 20S proteasome core is composed of 14 alpha and 14 beta subunits that assemble into four stacked heptameric rings, resulting in a barrel-shaped structure. The two inner rings, each composed of seven catalytic beta subunits, are sandwiched by two outer rings, each composed of seven alpha subunits. The catalytic chamber with the active sites is on the inside of the barrel. Has a gated structure, the ends of the cylinder being occluded by the N-termini of the alpha-subunits. Is capped at one or both ends by the proteasome regulatory ATPase, PAN.

The protein resides in the cytoplasm. With respect to regulation, the formation of the proteasomal ATPase PAN-20S proteasome complex, via the docking of the C-termini of PAN into the intersubunit pockets in the alpha-rings, triggers opening of the gate for substrate entry. Interconversion between the open-gate and close-gate conformations leads to a dynamic regulation of the 20S proteasome proteolysis activity. Functionally, component of the proteasome core, a large protease complex with broad specificity involved in protein degradation. The chain is Proteasome subunit alpha from Saccharolobus solfataricus (strain ATCC 35092 / DSM 1617 / JCM 11322 / P2) (Sulfolobus solfataricus).